The sequence spans 109 residues: MNMLAYFLYCRQLLLAVVLIEFPPRLCGNTLRFYSYHLPLSTCHISDSFYLTSRTTSNLLFCHLLYCHQKSHQKSHQKKTTGYLKLFSNTIENIKNMFNSSPYTLSTTA.

A signal peptide spans 1-28; sequence MNMLAYFLYCRQLLLAVVLIEFPPRLCG.

This is an uncharacterized protein from Homo sapiens (Human).